The following is a 70-amino-acid chain: Large ribosomal subunit protein uL29 (70 aa).

It belongs to the universal ribosomal protein uL29 family.

In Thermosynechococcus vestitus (strain NIES-2133 / IAM M-273 / BP-1), this protein is Large ribosomal subunit protein uL29.